The sequence spans 299 residues: Regucalcin (299 aa).

Residue E18 participates in a divalent metal cation binding. Residues R101, N103, and E121 each coordinate substrate. Residues N154 and D204 each contribute to the a divalent metal cation site. D204 functions as the Proton donor/acceptor in the catalytic mechanism. An N6-succinyllysine mark is found at K244 and K253.

Belongs to the SMP-30/CGR1 family. As to quaternary structure, monomer. Zn(2+) serves as cofactor. Mn(2+) is required as a cofactor. The cofactor is Ca(2+). It depends on Mg(2+) as a cofactor.

It is found in the cytoplasm. It carries out the reaction D-glucono-1,5-lactone + H2O = D-gluconate + H(+). The protein operates within cofactor biosynthesis; L-ascorbate biosynthesis via UDP-alpha-D-glucuronate pathway; L-ascorbate from UDP-alpha-D-glucuronate: step 3/4. Functionally, gluconolactonase with low activity towards other sugar lactones, including gulonolactone and galactonolactone. Catalyzes a key step in ascorbic acid (vitamin C) biosynthesis. Can also hydrolyze diisopropyl phosphorofluoridate and phenylacetate (in vitro). Calcium-binding protein. Modulates Ca(2+) signaling, and Ca(2+)-dependent cellular processes and enzyme activities. This is Regucalcin (RGN) from Bos taurus (Bovine).